The following is a 564-amino-acid chain: NAD-dependent malic enzyme (564 aa).

The active-site Proton donor is the Tyr102. Arg155 serves as a coordination point for NAD(+). Lys173 functions as the Proton acceptor in the catalytic mechanism. 3 residues coordinate a divalent metal cation: Glu244, Asp245, and Asp268. Residues Asp268 and Asn417 each coordinate NAD(+).

Belongs to the malic enzymes family. In terms of assembly, homotetramer. Mg(2+) is required as a cofactor. Mn(2+) serves as cofactor.

The enzyme catalyses (S)-malate + NAD(+) = pyruvate + CO2 + NADH. It carries out the reaction oxaloacetate + H(+) = pyruvate + CO2. This is NAD-dependent malic enzyme from Pseudomonas aeruginosa (strain LESB58).